A 233-amino-acid chain; its full sequence is Small ribosomal subunit protein uS2 (233 aa).

This sequence belongs to the universal ribosomal protein uS2 family.

The protein is Small ribosomal subunit protein uS2 of Clostridium novyi (strain NT).